The following is a 292-amino-acid chain: Large ribosomal subunit protein uL4 (292 aa).

Basic and acidic residues-rich tracts occupy residues 1-33 (MVEV…DKTA) and 42-51 (KVSDKAESTP). 2 disordered regions span residues 1–59 (MVEV…VKTS) and 132–158 (GTHK…TGKA).

The protein belongs to the universal ribosomal protein uL4 family. In terms of assembly, part of the 50S ribosomal subunit.

In terms of biological role, one of the primary rRNA binding proteins, this protein initially binds near the 5'-end of the 23S rRNA. It is important during the early stages of 50S assembly. It makes multiple contacts with different domains of the 23S rRNA in the assembled 50S subunit and ribosome. Its function is as follows. Forms part of the polypeptide exit tunnel. In Mycoplasmopsis pulmonis (strain UAB CTIP) (Mycoplasma pulmonis), this protein is Large ribosomal subunit protein uL4.